We begin with the raw amino-acid sequence, 140 residues long: METELMRIGVSLPDTLLSKFDEIIEKRGYSSRSEGIRDAIRSYISYYEWMGDIKGHRVGTVAVIYDHTKRGLSNALADIQHHYSHLIKSSVHIHLDHDNCFEVIVLDGDGEEIKELAEAIMALKGVKFSKLTTVASNEKI.

Ni(2+) contacts are provided by H81, H92, H94, and C100.

This sequence belongs to the transcriptional regulatory CopG/NikR family. Requires Ni(2+) as cofactor.

In terms of biological role, transcriptional regulator. The sequence is that of Putative nickel-responsive regulator 3 from Methanosarcina acetivorans (strain ATCC 35395 / DSM 2834 / JCM 12185 / C2A).